We begin with the raw amino-acid sequence, 919 residues long: UPF0182 protein SUN_1015 (919 aa).

The next 7 helical transmembrane spans lie at 8 to 28, 51 to 71, 102 to 122, 158 to 178, 207 to 227, 246 to 266, and 274 to 294; these read IIIT…VDYY, ILSF…HIHF, AVAW…GSYA, VYQF…IGVL, LTAF…YNIL, IPAY…LFFY, and VIVS…WIYP.

It belongs to the UPF0182 family.

Its subcellular location is the cell membrane. The chain is UPF0182 protein SUN_1015 from Sulfurovum sp. (strain NBC37-1).